The chain runs to 139 residues: D-ribose pyranase (139 aa).

His-20 (proton donor) is an active-site residue. Residues Asp-28, His-106, and Tyr-128–Asn-130 contribute to the substrate site.

The protein belongs to the RbsD / FucU family. RbsD subfamily. In terms of assembly, homodecamer.

It localises to the cytoplasm. It carries out the reaction beta-D-ribopyranose = beta-D-ribofuranose. The protein operates within carbohydrate metabolism; D-ribose degradation; D-ribose 5-phosphate from beta-D-ribopyranose: step 1/2. In terms of biological role, catalyzes the interconversion of beta-pyran and beta-furan forms of D-ribose. This chain is D-ribose pyranase, found in Vibrio cholerae serotype O1 (strain ATCC 39541 / Classical Ogawa 395 / O395).